A 306-amino-acid polypeptide reads, in one-letter code: Bifunctional protein FolD (306 aa).

Residues 169-171, serine 194, and isoleucine 235 each bind NADP(+); that span reads GRS.

It belongs to the tetrahydrofolate dehydrogenase/cyclohydrolase family. In terms of assembly, homodimer.

It catalyses the reaction (6R)-5,10-methylene-5,6,7,8-tetrahydrofolate + NADP(+) = (6R)-5,10-methenyltetrahydrofolate + NADPH. The catalysed reaction is (6R)-5,10-methenyltetrahydrofolate + H2O = (6R)-10-formyltetrahydrofolate + H(+). The protein operates within one-carbon metabolism; tetrahydrofolate interconversion. Its function is as follows. Catalyzes the oxidation of 5,10-methylenetetrahydrofolate to 5,10-methenyltetrahydrofolate and then the hydrolysis of 5,10-methenyltetrahydrofolate to 10-formyltetrahydrofolate. The protein is Bifunctional protein FolD of Thermosynechococcus vestitus (strain NIES-2133 / IAM M-273 / BP-1).